Here is a 361-residue protein sequence, read N- to C-terminus: Tyrosine--tRNA ligase (361 aa).

L-tyrosine contacts are provided by Tyr36, Tyr162, Gln166, Asp169, and Gln184. Residues 235-239 (KMSKS) carry the 'KMSKS' region motif. Lys238 serves as a coordination point for ATP.

It belongs to the class-I aminoacyl-tRNA synthetase family. TyrS type 4 subfamily. As to quaternary structure, homodimer.

It is found in the cytoplasm. The catalysed reaction is tRNA(Tyr) + L-tyrosine + ATP = L-tyrosyl-tRNA(Tyr) + AMP + diphosphate + H(+). Functionally, catalyzes the attachment of tyrosine to tRNA(Tyr) in a two-step reaction: tyrosine is first activated by ATP to form Tyr-AMP and then transferred to the acceptor end of tRNA(Tyr). The protein is Tyrosine--tRNA ligase of Sulfolobus acidocaldarius (strain ATCC 33909 / DSM 639 / JCM 8929 / NBRC 15157 / NCIMB 11770).